Reading from the N-terminus, the 345-residue chain is UPF0284 protein STK_21430 (345 aa).

The protein belongs to the UPF0284 family.

The polypeptide is UPF0284 protein STK_21430 (Sulfurisphaera tokodaii (strain DSM 16993 / JCM 10545 / NBRC 100140 / 7) (Sulfolobus tokodaii)).